A 478-amino-acid chain; its full sequence is MGPTRVPRRTVLFQRERTGLTYRVPALLCVPPRPTLLAFAEQRLSPDDSHAHRLVLRRGTLTRGSVRWGTLSVLETAVLEEHRSMNPCPVLDEHSGTIFLFFIAVLGHTPEAVQIATGKNAARLCCVTSCDAGLTWGSVRDLTEEAIGAALQDWATFAVGPGHGVQLRSGRLLVPAYTYHVDRRECFGKICWTSPHSLAFYSDDHGISWHCGGLVPNLRSGECQLAAVDGDFLYCNARSPLGNRVQALSADEGTSFLPGELVPTLAETARGCQGSIVGFLAPPSIEPQDDRWTGSPRNTPHSPCFNLRVQESSGEGARGLLERWMPRLPLCYPQSRSPENHGLEPGSDGDKTSWTPECPMSSDSMLQSPTWLLYSHPAGRRARLHMGIYLSRSPLDPHSWTEPWVIYEGPSGYSDLAFLGPMPGASLVFACLFESGTRTSYEDISFCLFSLADVLENVPTGLEMLSLRDKAQGHCWPS.

The FRIP motif motif lies at 22-25; it reads YRVP. Substrate contacts are provided by arginine 23 and arginine 43. Catalysis depends on proton acceptor residues aspartate 47 and aspartate 48. A BNR 1 repeat occupies 127–138; the sequence is VTSCDAGLTWGS. Substrate-binding residues include tyrosine 177 and tyrosine 179. One copy of the BNR 2 repeat lies at 200 to 211; that stretch reads FYSDDHGISWHC. Substrate contacts are provided by glutamate 222 and arginine 238. Residues 247–258 form a BNR 3 repeat; sequence ALSADEGTSFLP. Disordered stretches follow at residues 285 to 307 and 335 to 359; these read IEPQ…CFNL and SRSP…PECP. Arginine 383 is a substrate binding site. The Nucleophile role is filled by tyrosine 413. Glutamate 434 is a catalytic residue.

It belongs to the glycosyl hydrolase 33 family. In terms of tissue distribution, highly expressed in brain, particularly in hippocampus, and at lower levels in liver and spleen. Expressed in hippocampal neurons (at protein level).

The protein resides in the cell membrane. It localises to the endoplasmic reticulum membrane. Its subcellular location is the microsome membrane. It is found in the mitochondrion inner membrane. The protein localises to the mitochondrion outer membrane. The protein resides in the cell projection. It localises to the neuron projection. Its subcellular location is the lysosome lumen. It carries out the reaction Hydrolysis of alpha-(2-&gt;3)-, alpha-(2-&gt;6)-, alpha-(2-&gt;8)- glycosidic linkages of terminal sialic acid residues in oligosaccharides, glycoproteins, glycolipids, colominic acid and synthetic substrates.. The catalysed reaction is a ganglioside GM3 + H2O = a beta-D-galactosyl-(1-&gt;4)-beta-D-glucosyl-(1&lt;-&gt;1)-ceramide + N-acetylneuraminate. The enzyme catalyses a ganglioside GM3 (d18:1(4E)) + H2O = a beta-D-Gal-(1-&gt;4)-beta-D-Glc-(1&lt;-&gt;1)-Cer(d18:1(4E)) + N-acetylneuraminate. It catalyses the reaction a ganglioside GM2 + H2O = a ganglioside GA2 + N-acetylneuraminate. It carries out the reaction a ganglioside GM2 (d18:1(4E)) + H2O = a ganglioside GA2 (d18:1(4E)) + N-acetylneuraminate. The catalysed reaction is a ganglioside GD1a + H2O = a ganglioside GM1 + N-acetylneuraminate. The enzyme catalyses a ganglioside GD1a (d18:1(4E)) + H2O = a ganglioside GM1 (d18:1(4E)) + N-acetylneuraminate. It catalyses the reaction a ganglioside GD3 + H2O = a ganglioside GM3 + N-acetylneuraminate. It carries out the reaction a ganglioside GD3 (d18:1(4E)) + H2O = a ganglioside GM3 (d18:1(4E)) + N-acetylneuraminate. Functionally, exo-alpha-sialidase that catalyzes the hydrolytic cleavage of the terminal sialic acid (N-acetylneuraminic acid, Neu5Ac) of a glycan moiety in the catabolism of glycolipids, glycoproteins and oligosacharides. Efficiently hydrolyzes gangliosides including alpha-(2-&gt;3)-sialylated GD1a and GM3 and alpha-(2-&gt;8)-sialylated GD3. Hydrolyzes poly-alpha-(2-&gt;8)-sialylated neural cell adhesion molecule NCAM1 likely at growth cones, suppressing neurite outgrowth in hippocampal neurons. May desialylate sialyl Lewis A and X antigens at the cell surface, down-regulating these glycan epitopes recognized by SELE/E selectin in the initiation of cell adhesion and extravasation. Has sialidase activity toward mucin, fetuin and sialyllactose. The polypeptide is Sialidase-4 (Neu4) (Mus musculus (Mouse)).